Consider the following 253-residue polypeptide: MSVSSRPGRRRFALIPSAGTGTRAGGDLPKQYQPLAGRPMLWHTVQAFLASAAIDRVVVVTSPGAPALAARFPGLGFDAARLVEVDCGGDSRHASVTNGLAALRGLGAHEDDWVLVHDAARPGLTPALIARLVGAVEADGGQAVGGILALPVADTLKRADAGQHIAETVPRGGLWQAQTPQMFPLGLLQRALSEALTAQRIVTDEASAIEAAGHRPLLVAGALRNFKVTYPDDFALAEAILAGAAPTQEDSQA.

Residues 1-28 (MSVSSRPGRRRFALIPSAGTGTRAGGDL) are disordered.

It belongs to the IspD/TarI cytidylyltransferase family. IspD subfamily.

The catalysed reaction is 2-C-methyl-D-erythritol 4-phosphate + CTP + H(+) = 4-CDP-2-C-methyl-D-erythritol + diphosphate. Its pathway is isoprenoid biosynthesis; isopentenyl diphosphate biosynthesis via DXP pathway; isopentenyl diphosphate from 1-deoxy-D-xylulose 5-phosphate: step 2/6. In terms of biological role, catalyzes the formation of 4-diphosphocytidyl-2-C-methyl-D-erythritol from CTP and 2-C-methyl-D-erythritol 4-phosphate (MEP). The sequence is that of 2-C-methyl-D-erythritol 4-phosphate cytidylyltransferase from Ralstonia nicotianae (strain ATCC BAA-1114 / GMI1000) (Ralstonia solanacearum).